Here is a 71-residue protein sequence, read N- to C-terminus: Small ribosomal subunit protein bS18 (71 aa).

It belongs to the bacterial ribosomal protein bS18 family. In terms of assembly, part of the 30S ribosomal subunit. Forms a tight heterodimer with protein bS6.

In terms of biological role, binds as a heterodimer with protein bS6 to the central domain of the 16S rRNA, where it helps stabilize the platform of the 30S subunit. This Acaryochloris marina (strain MBIC 11017) protein is Small ribosomal subunit protein bS18.